The sequence spans 661 residues: Fructose-1,6-bisphosphatase class 3 (661 aa).

Belongs to the FBPase class 3 family. The cofactor is Mn(2+).

It carries out the reaction beta-D-fructose 1,6-bisphosphate + H2O = beta-D-fructose 6-phosphate + phosphate. The protein operates within carbohydrate biosynthesis; gluconeogenesis. The sequence is that of Fructose-1,6-bisphosphatase class 3 from Clostridioides difficile (strain 630) (Peptoclostridium difficile).